The chain runs to 356 residues: MGSTCSTPESKEQKRINSVIDKQIRKDEDDEIGNQKLLLLGTGECGKSTILKQINILHSSGFSKADLKNVAGTVYSNIIQGVATLLKAKDHFYYELSTPELDADAQHILSLADSSKDAMPFIPLTFNAIKRLWHDPVVQKTFERRAEFQMMDTLVYFMNELDRINNADYIPTVDDMLRIRIPTMGVVQQTIEIKGTKFRIYDVGGQRSERRKWIHLFDNVNATIFISAINEFNQKLNEDGQTNRMKESIKLFETICNSRWFVQAAMILFLNKRDLFEQKLKTTSINVLFSTYQGSNDYAECVAYIQMRFERLNKYSDIKKIYTHVTCATDTNQIQLVIDSVVDMVIGRNLRGTGME.

Glycine 2 carries N-myristoyl glycine lipidation. The S-palmitoyl cysteine moiety is linked to residue cysteine 5. In terms of domain architecture, G-alpha spans 33-356; sequence GNQKLLLLGT…GRNLRGTGME (324 aa). Residues 36–49 are G1 motif; that stretch reads KLLLLGTGECGKST. Residues 41-48, 177-183, 202-206, 271-274, and alanine 328 contribute to the GTP site; these read GTGECGKS, LRIRIPT, DVGGQ, and NKRD. Mg(2+) is bound by residues serine 48 and threonine 183. The tract at residues 175-183 is G2 motif; it reads DMLRIRIPT. Positions 198-207 are G3 motif; that stretch reads FRIYDVGGQR. The interval 267–274 is G4 motif; the sequence is ILFLNKRD. The interval 326–331 is G5 motif; the sequence is TCATDT.

This sequence belongs to the G-alpha family. In terms of assembly, g proteins are composed of 3 units; alpha, beta and gamma. The alpha chain contains the guanine nucleotide binding site.

In terms of biological role, guanine nucleotide-binding proteins (G proteins) are involved as modulators or transducers in various transmembrane signaling systems. The protein is Guanine nucleotide-binding protein alpha-15 subunit (gpa-15) of Caenorhabditis elegans.